The sequence spans 618 residues: Auxin efflux carrier component 3a (618 aa).

The Extracellular portion of the chain corresponds to 1 to 6 (MISGHD). The helical transmembrane segment at 7–27 (FYTVMAAVVPLYVAMFLAYGS) threads the bilayer. The Cytoplasmic segment spans residues 28–38 (VRWWGIFTPDQ). A helical transmembrane segment spans residues 39-59 (CSGINRFVAIFAVPLLSFHFI). V51 contacts (indol-3-yl)acetate. Over 60-70 (STNDPYAMNLR) the chain is Extracellular. Residues 71–90 (FLAADTLQKLLVLAGLAAWS) form a helical membrane-spanning segment. Topologically, residues 91 to 104 (RLPSRTGAPRLDWS) are cytoplasmic. Residues 105–125 (ITLFSLSTLPNTLVMGIPLLI) traverse the membrane as a helical segment. (indol-3-yl)acetate is bound by residues N115 and L117. Topologically, residues 126-134 (AMYGPYSGS) are extracellular. The chain crosses the membrane as a helical span at residues 135–155 (LMVQIVVLQCIIWYTLMLFLF). Y148 contacts (indol-3-yl)acetate. Topologically, residues 156 to 478 (EFRAARMLIA…LIRNPNTYSS (323 aa)) are cytoplasmic. Residues 281–293 (SLQSSRGPTPRQS) show a composition bias toward polar residues. The segment at 281-312 (SLQSSRGPTPRQSNFDEHSARPPKPPATTTGA) is disordered. Residues 479–499 (LLGLAWSLVAFRWHVSMPAIV) form a helical membrane-spanning segment. Over 500-502 (EKS) the chain is Extracellular. Residues 503-523 (ISILSDAGLGMAMFSLGLFMA) form a helical membrane-spanning segment. The Cytoplasmic portion of the chain corresponds to 524 to 539 (LQPSIIACGKSAAVVS). Residues 540 to 560 (MAVRFLAGPAVMAAASIAIGL) form a helical membrane-spanning segment. Residues 561–563 (RGT) lie on the Extracellular side of the membrane. Residues 564–584 (LLHVAIVQAALPQGIVPFVFA) form a helical membrane-spanning segment. Positions 578 and 579 each coordinate (indol-3-yl)acetate. The Cytoplasmic portion of the chain corresponds to 585 to 597 (KEYNVHPAILSTA). The helical transmembrane segment at 598–618 (VIFGMLIALPITLLYYILLGL) threads the bilayer.

Belongs to the auxin efflux carrier (TC 2.A.69.1) family. Homodimer. In terms of tissue distribution, expressed in coleoptiles, roots, vascular bundles of leaves, shoots, lamina joints and vascular bundles of the lemma and filament. Expressed in stem bases, stems, leaves and young panicles.

The protein localises to the cell membrane. Its function is as follows. Acts as a component of the auxin efflux carrier. Involved in the polar auxin transport which may regulate crown root development and response to water stress. In Oryza sativa subsp. japonica (Rice), this protein is Auxin efflux carrier component 3a.